The sequence spans 739 residues: Vascular cell adhesion protein 1 (739 aa).

The signal sequence occupies residues 1-24 (MPRKMVVIFGASNILWMVFAVSQA). Ig-like C2-type domains lie at 25 to 105 (SKME…KKLE), 109 to 212 (QVEI…KERE), 223 to 309 (PRNT…LIVQ), 312 to 399 (PFTV…IKVD), 408 to 506 (EVEM…QTLY), 511 to 595 (PRDT…VELI), and 600 to 684 (PKDI…LTLD). Topologically, residues 25 to 698 (SKMEIFLEPR…ENNKDYFSPE (674 aa)) are extracellular. 5 disulfide bridges follow: Cys-47-Cys-95, Cys-52-Cys-99, Cys-137-Cys-195, Cys-246-Cys-291, and Cys-335-Cys-383. N-linked (GlcNAc...) asparagine glycans are attached at residues Asn-76 and Asn-77. A glycan (N-linked (GlcNAc...) asparagine) is linked at Asn-273. Asn-531 carries N-linked (GlcNAc...) asparagine glycosylation. Cys-534 and Cys-579 form a disulfide bridge. The chain crosses the membrane as a helical span at residues 699–720 (LLVLYCASSLIIPAIGMIIYFA). Over 721–739 (RRANMKGSYSLVEAQKSKV) the chain is Cytoplasmic.

In terms of processing, cleaved by the metalloproteinase ADAM17 to generate the soluble form. Sialoglycoprotein. Post-translationally, ubiquitinated by TRIM65 via 'Lys-48'-linked ubiquitination; leading to proteasomal degradation.

The protein localises to the cell membrane. The protein resides in the secreted. Cell adhesion glycoprotein predominantly expressed on the surface of endothelial cells that plays an important role in immune surveillance and inflammation. Acts as a major regulator of leukocyte adhesion to the endothelium through interaction with different types of integrins. During inflammatory responses, binds ligands on the surface of activated endothelial cells to initiate the activation of calcium channels and the plasma membrane-associated small GTPase RAC1 leading to leukocyte transendothelial migration. Also serves as a quality-control checkpoint for entry into bone marrow by providing a 'don't-eat-me' stamping in the context of major histocompatibility complex (MHC) class-I presentation. This chain is Vascular cell adhesion protein 1 (VCAM1), found in Canis lupus familiaris (Dog).